The primary structure comprises 723 residues: Polyribonucleotide nucleotidyltransferase (723 aa).

Residues aspartate 488 and aspartate 494 each coordinate Mg(2+). In terms of domain architecture, KH spans 555–614 (PKIITLNIKPEKIKDVIGPGGKQINAIIDETGVKIDIEQDGTVYIASQDQAMNRKAIAII). Residues 624 to 692 (GEVYTGKVRR…QQGRVNLSRK (69 aa)) enclose the S1 motif domain. The disordered stretch occupies residues 692 to 723 (KALLEKKEQPEGDKKPQAEKKFYPKTKKPESK). The span at 693-723 (ALLEKKEQPEGDKKPQAEKKFYPKTKKPESK) shows a compositional bias: basic and acidic residues.

It belongs to the polyribonucleotide nucleotidyltransferase family. It depends on Mg(2+) as a cofactor.

The protein resides in the cytoplasm. It carries out the reaction RNA(n+1) + phosphate = RNA(n) + a ribonucleoside 5'-diphosphate. Functionally, involved in mRNA degradation. Catalyzes the phosphorolysis of single-stranded polyribonucleotides processively in the 3'- to 5'-direction. This Listeria monocytogenes serotype 4a (strain HCC23) protein is Polyribonucleotide nucleotidyltransferase.